The following is a 315-amino-acid chain: Lipase 3 (315 aa).

The N-terminal stretch at 1-18 is a signal peptide; that stretch reads MLLKRLGLAALFSLSMVG. Cysteine 19 is lipidated: N-palmitoyl cysteine. A lipid anchor (S-diacylglycerol cysteine) is attached at cysteine 19. Residues 69 to 296 enclose the AB hydrolase-1 domain; the sequence is PLLLIHGFGG…MNDVGHVPMV (228 aa). Histidine 74 is a catalytic residue. The active-site Charge relay system is the serine 142.

This sequence belongs to the lipase/esterase LIP3/BchO family.

It localises to the cell membrane. It catalyses the reaction a triacylglycerol + H2O = a diacylglycerol + a fatty acid + H(+). This is Lipase 3 (lip3) from Moraxella sp. (strain TA144).